A 534-amino-acid chain; its full sequence is MATARVEYIAPWWVYWLHNLPHVDFSLQRESGDFNPKDPGYQQTLLFVALFIALCAAVNLLFVSGYLICLCCCKKEDETETKMTSSCCVTWTAAVSGLLCCAAVGIGFYGNSETNDGVYQLTYSLDNANHTLAGIDSLVSNTNAKMKEDLDQHLFRLNEIFAARGDYIQSLRFMQQMAGNIIQQLTSLPNWQGTSVNFSEIARNASIIEYYRWLSYLILFITDVVICLVTCLGLAKKSKCLLLTMLCCGLIALMLSWASLALETSSAVGTSDFCVAPDKFILNMTPDQITADVVHYYLYCSQSQRNPFQQALTVFQRSLTTMQIQIQGLLQFAVPLFPTAQKDLLGIQLLLNTSESNLHQITALLDCRGLHKDYLEALIGICYDGVEGLLYLSLFSLLAAVAFTAMVCAMPRAWKHLAARDRDYNDVDDEDPFNPQARRIAVHNPNRGQLRSFCSYSSSLGSQASLQPPAQTVSNAQAAEYMNQAALFGGNPRYENVPLIGRGSPPPTYSPTMRATYLSMNEESPNIYSNVFPA.

Over 1–44 the chain is Extracellular; that stretch reads MATARVEYIAPWWVYWLHNLPHVDFSLQRESGDFNPKDPGYQQT. Residues 45 to 65 traverse the membrane as a helical segment; it reads LLFVALFIALCAAVNLLFVSG. The Cytoplasmic segment spans residues 66–87; it reads YLICLCCCKKEDETETKMTSSC. Residues 88–108 traverse the membrane as a helical segment; sequence CVTWTAAVSGLLCCAAVGIGF. At 109-213 the chain is on the extracellular side; it reads YGNSETNDGV…NASIIEYYRW (105 aa). Residues Glu-113 and Asp-116 each coordinate Ca(2+). A glycan (N-linked (GlcNAc...) asparagine) is linked at Asn-129. An RGD motif is present at residues 164 to 166; the sequence is RGD. Residues Asn-197 and Asn-204 are each glycosylated (N-linked (GlcNAc...) asparagine). The chain crosses the membrane as a helical span at residues 214–234; sequence LSYLILFITDVVICLVTCLGL. The Cytoplasmic segment spans residues 235-240; it reads AKKSKC. A helical membrane pass occupies residues 241–261; sequence LLLTMLCCGLIALMLSWASLA. Residues 262–388 lie on the Extracellular side of the membrane; the sequence is LETSSAVGTS…IGICYDGVEG (127 aa). Cystine bridges form between Cys-274–Cys-382 and Cys-300–Cys-367. An N-linked (GlcNAc...) asparagine glycan is attached at Asn-352. A helical transmembrane segment spans residues 389-409; the sequence is LLYLSLFSLLAAVAFTAMVCA. The Cytoplasmic segment spans residues 410-534; it reads MPRAWKHLAA…PNIYSNVFPA (125 aa).

Belongs to the tweety family. In terms of assembly, forms cis-homodimers in the presence of Ca(+2) and forms monomers and trans-dimers in the absence of Ca(2+).

Its subcellular location is the cell membrane. It catalyses the reaction chloride(in) = chloride(out). It carries out the reaction L-glutamate(out) = L-glutamate(in). May act as a calcium-independent, swelling-dependent volume-regulated anion channel (VRAC-swell) which plays a pivotal role in the process of regulatory volume decrease (RVD) in the brain through the efflux of anions like chloride and organic osmolytes like glutamate. Probable large-conductance Ca(2+)-activated chloride channel. This chain is Protein tweety homolog 2 (ttyh2), found in Xenopus laevis (African clawed frog).